A 613-amino-acid polypeptide reads, in one-letter code: MRLLLIHARSFSFEVRDKAVENPEPLTEELKRGSADNTLVVFTTVEENDNDSPSFLERVADDVLDVAGKVKASSVFLYPYAHLSPNLAPPPKAITILNALYETLKGKASIPVYRAPFGWYKAFNISCLGHPLSELSRTITPQESAPQRKPYTRDYYVIVSPDGSIHDPASYSFSERDADLKVLVDKEVFKRELEGKEQPRYIDYCLKFGFEWEPLSDVGHMRYGPYATVMLELLDDYSYQVAKSLGIPVFKVKGTNMFRLSDKAISEHAGLFGERMYITESDEELVMRYAACFQQFAMIKDWVLSYRNLPLGMLEIADSYRYEQPGETVLCFRLRRFYMPDLHIFVKDLKEAMDVGLRLHAKIFEEIRRIGRDYVSLYNVSKEFFDQNKDYLVELARREGKPILVRVLEGAKYYWVLNVEYHIIDELKRPREIATFQFDIGNAQRFGIKYRDEGNNIKYPVIIHTAILGSIERFIFALLDTAAINEANGKVPALPTWITPVQVRVIPVSSGYNEGAIELARRIEEAGFRVEVDDRDETVGRKIRDAETLWVPYIVVFGEREAKTGSLSVRVRGVGQVSMSIEELLNRLNEETKGYPRKPLTAPMLLSIRPPLP.

Positions 1–147 are editing domain; the sequence is MRLLLIHARS…TITPQESAPQ (147 aa). 2 catalytic regions span residues 199–495 and 200–495; these read PRYI…PALP and RYID…PALP. Residues C292, H343, and H464 each contribute to the Zn(2+) site.

This sequence belongs to the class-II aminoacyl-tRNA synthetase family. As to quaternary structure, homodimer. Zn(2+) is required as a cofactor.

Its subcellular location is the cytoplasm. It catalyses the reaction tRNA(Thr) + L-threonine + ATP = L-threonyl-tRNA(Thr) + AMP + diphosphate + H(+). Catalyzes the attachment of threonine to tRNA(Thr) in a two-step reaction: L-threonine is first activated by ATP to form Thr-AMP and then transferred to the acceptor end of tRNA(Thr). Also edits incorrectly charged L-seryl-tRNA(Thr). The protein is Threonine--tRNA ligase of Caldivirga maquilingensis (strain ATCC 700844 / DSM 13496 / JCM 10307 / IC-167).